A 698-amino-acid polypeptide reads, in one-letter code: Cytochrome c oxidase subunit 1 (698 aa).

Residues 65-85 traverse the membrane as a helical segment; sequence INYLYFSMVTGLSGAALATMI. Glu88 is a Ca(2+) binding site. His111 contributes to the Fe(II)-heme a binding site. A run of 8 helical transmembrane segments spans residues 113–133, 147–167, 304–324, 349–369, 395–415, 434–454, 468–488, and 498–518; these read LIMVFFVVVPILFGGFANFLI, LNSIGFWIQPCGYILLAKIGF, ILILSVVFAGISTTISFTNLL, IFLTLRMLATITPVLGAAVIM, LFWFFGHPEVYVLIIPTFGFI, IWAIYVMAYMGYLVWGHHMYL, ITIMISMPATIKVVNWTLSLV, and FLFSMSFLLLFLVAGFTGMWL. His401 is a Cu cation binding site. Residues 401-405 constitute a cross-link (1'-histidyl-3'-tyrosine (His-Tyr)); it reads HPEVY. An O2-binding site is contributed by Tyr405. His450 and His451 together coordinate Cu cation. Residues His528 and Asp529 each coordinate Mg(2+). The next 3 membrane-spanning stretches (helical) occupy residues 533–553, 574–594, and 613–633; these read VVAHFHIMLSGAAITGIFSGF, LIYYSGGQWVAFVPQFYLGFS, and MSTAGHFITLIGIMFFFLMIF. Position 536 (His536) interacts with heme a3. His538 contacts Fe(II)-heme a.

The protein belongs to the heme-copper respiratory oxidase family. As to quaternary structure, component of the cytochrome c oxidase (complex IV, CIV), a multisubunit enzyme composed of a catalytic core of 3 subunits and several supernumerary subunits. The complex exists as a monomer or a dimer and forms supercomplexes (SCs) in the inner mitochondrial membrane with ubiquinol-cytochrome c oxidoreductase (cytochrome b-c1 complex, complex III, CIII). Heme is required as a cofactor. It depends on Cu cation as a cofactor.

It localises to the mitochondrion inner membrane. The catalysed reaction is 4 Fe(II)-[cytochrome c] + O2 + 8 H(+)(in) = 4 Fe(III)-[cytochrome c] + 2 H2O + 4 H(+)(out). The protein operates within energy metabolism; oxidative phosphorylation. Functionally, component of the cytochrome c oxidase, the last enzyme in the mitochondrial electron transport chain which drives oxidative phosphorylation. The respiratory chain contains 3 multisubunit complexes succinate dehydrogenase (complex II, CII), ubiquinol-cytochrome c oxidoreductase (cytochrome b-c1 complex, complex III, CIII) and cytochrome c oxidase (complex IV, CIV), that cooperate to transfer electrons derived from NADH and succinate to molecular oxygen, creating an electrochemical gradient over the inner membrane that drives transmembrane transport and the ATP synthase. Cytochrome c oxidase is the component of the respiratory chain that catalyzes the reduction of oxygen to water. Electrons originating from reduced cytochrome c in the intermembrane space (IMS) are transferred via the dinuclear copper A center (CU(A)) of subunit 2 and heme A of subunit 1 to the active site in subunit 1, a binuclear center (BNC) formed by heme A3 and copper B (CU(B)). The BNC reduces molecular oxygen to 2 water molecules using 4 electrons from cytochrome c in the IMS and 4 protons from the mitochondrial matrix. This Tetrahymena pyriformis protein is Cytochrome c oxidase subunit 1 (COI).